The sequence spans 318 residues: Homoserine kinase (318 aa).

ATP is bound at residue 97–107 (PIGSGLGSSAC).

The protein belongs to the GHMP kinase family. Homoserine kinase subfamily.

Its subcellular location is the cytoplasm. The catalysed reaction is L-homoserine + ATP = O-phospho-L-homoserine + ADP + H(+). The protein operates within amino-acid biosynthesis; L-threonine biosynthesis; L-threonine from L-aspartate: step 4/5. Catalyzes the ATP-dependent phosphorylation of L-homoserine to L-homoserine phosphate. In Vibrio cholerae serotype O1 (strain M66-2), this protein is Homoserine kinase.